Here is a 224-residue protein sequence, read N- to C-terminus: ATP-dependent dethiobiotin synthetase BioD (224 aa).

Residue Gly-14–Val-19 coordinates ATP. Thr-18 is a Mg(2+) binding site. Lys-39 is a catalytic residue. Ser-43 provides a ligand contact to substrate. Residues Asp-56, Glu-117–Gly-120, and Asn-177–Glu-178 each bind ATP. 2 residues coordinate Mg(2+): Asp-56 and Glu-117.

This sequence belongs to the dethiobiotin synthetase family. In terms of assembly, homodimer. It depends on Mg(2+) as a cofactor.

The protein resides in the cytoplasm. The catalysed reaction is (7R,8S)-7,8-diammoniononanoate + CO2 + ATP = (4R,5S)-dethiobiotin + ADP + phosphate + 3 H(+). The protein operates within cofactor biosynthesis; biotin biosynthesis; biotin from 7,8-diaminononanoate: step 1/2. Catalyzes a mechanistically unusual reaction, the ATP-dependent insertion of CO2 between the N7 and N8 nitrogen atoms of 7,8-diaminopelargonic acid (DAPA, also called 7,8-diammoniononanoate) to form a ureido ring. This chain is ATP-dependent dethiobiotin synthetase BioD, found in Xanthomonas campestris pv. campestris (strain 8004).